Consider the following 736-residue polypeptide: Oxysterol-binding protein-related protein 9 (736 aa).

Ala2 is modified (N-acetylalanine). The region spanning 2 to 99 (ASIMEGPLSK…WIHALEETIL (98 aa)) is the PH domain. The tract at residues 231–367 (KSEQRPSSLP…DRDDDAEAGS (137 aa)) is disordered. Over residues 253–290 (TPTPNSTGSGHSPPSSSLTSPSHVNLSPNTVPEFSYSS) the composition is skewed to low complexity. 5 positions are modified to phosphoserine: Ser306, Ser324, Ser325, Ser326, and Ser329. 2 stretches are compositionally biased toward polar residues: residues 314–329 (SSGS…SGNS) and 336–347 (TESLNSSLSNGT). Ser611 bears the Phosphoserine mark.

The protein belongs to the OSBP family. As to quaternary structure, heterodimer with OSBPL11. Interacts with OSBPL10. In terms of tissue distribution, widely expressed.

It is found in the late endosome membrane. Its subcellular location is the golgi apparatus. It localises to the trans-Golgi network membrane. It carries out the reaction a 1,2-diacyl-sn-glycero-3-phospho-(1D-myo-inositol 4-phosphate)(out) + a 1,2-diacyl-sn-glycero-3-phospho-L-serine(in) = a 1,2-diacyl-sn-glycero-3-phospho-(1D-myo-inositol 4-phosphate)(in) + a 1,2-diacyl-sn-glycero-3-phospho-L-serine(out). Interacts with OSBPL11 to function as lipid transfer proteins. Together they form a heterodimer that localizes at the ER-trans-Golgi membrane contact sites, and exchanges phosphatidylserine (1,2-diacyl-sn-glycero-3-phospho-L-serine, PS) for phosphatidylinositol-4-phosphate (1,2-diacyl-sn-glycero-3-phospho-(1D-myo-inositol 4-phosphate), PI(4)P) between the two organelles, a step that is critical for sphingomyelin synthesis in the Golgi complex. In Homo sapiens (Human), this protein is Oxysterol-binding protein-related protein 9 (OSBPL9).